The primary structure comprises 148 residues: UPF0756 membrane protein YeaL (148 aa).

4 consecutive transmembrane segments (helical) span residues 14–34 (ALGFISHNTTVAVSILVLIIV), 51–71 (LSIGIIILTIGVMAPIASGTL), 86–106 (LVAIAVGVIVYWLGGRGVTLM), and 121–141 (VLGVALFRGVPVGPLIAAGLV).

The protein belongs to the UPF0756 family.

It localises to the cell membrane. The polypeptide is UPF0756 membrane protein YeaL (Shigella dysenteriae serotype 1 (strain Sd197)).